The following is a 118-amino-acid chain: Putative pterin-4-alpha-carbinolamine dehydratase (118 aa).

Belongs to the pterin-4-alpha-carbinolamine dehydratase family.

The catalysed reaction is (4aS,6R)-4a-hydroxy-L-erythro-5,6,7,8-tetrahydrobiopterin = (6R)-L-erythro-6,7-dihydrobiopterin + H2O. The chain is Putative pterin-4-alpha-carbinolamine dehydratase from Pseudomonas putida (strain ATCC 700007 / DSM 6899 / JCM 31910 / BCRC 17059 / LMG 24140 / F1).